We begin with the raw amino-acid sequence, 20 residues long: Putative beta-neurotoxin (20 aa).

The 20-residue stretch at 1–20 (KDGYLVGSDGCKYSCLTRPG) folds into the LCN-type CS-alpha/beta domain.

Expressed by the venom gland.

It localises to the secreted. Functionally, beta toxins bind voltage-independently at site-4 of sodium channels (Nav) and shift the voltage of activation toward more negative potentials thereby affecting sodium channel activation and promoting spontaneous and repetitive firing. The chain is Putative beta-neurotoxin from Tityus pachyurus (Colombian scorpion).